Consider the following 115-residue polypeptide: MALNWSFRVIFVSAMWCALLKFATLEEREDDNDYGGGCPFVVLGNGTHAKPAGCSHLCNGAPETLDNIECYNVTEEVAKRMTPDIPYTCWLGWCSKGECKRDNRTEVCYRGSERE.

The signal sequence occupies residues 1–25 (MALNWSFRVIFVSAMWCALLKFATL). Intrachain disulfides connect C38-C58, C54-C94, C70-C99, and C89-C108. 3 N-linked (GlcNAc...) asparagine glycosylation sites follow: N45, N72, and N103.

The protein localises to the secreted. In terms of biological role, salivary chemokine-binding protein which binds to host chemokines CCL3 and CCL4. The polypeptide is Evasin P1181 (Amblyomma maculatum (Gulf Coast tick)).